Consider the following 743-residue polypeptide: 1,4-alpha-glucan branching enzyme GlgB (743 aa).

Asp423 acts as the Nucleophile in catalysis. Residue Glu476 is the Proton donor of the active site.

The protein belongs to the glycosyl hydrolase 13 family. GlgB subfamily. In terms of assembly, monomer.

It carries out the reaction Transfers a segment of a (1-&gt;4)-alpha-D-glucan chain to a primary hydroxy group in a similar glucan chain.. The protein operates within glycan biosynthesis; glycogen biosynthesis. Functionally, catalyzes the formation of the alpha-1,6-glucosidic linkages in glycogen by scission of a 1,4-alpha-linked oligosaccharide from growing alpha-1,4-glucan chains and the subsequent attachment of the oligosaccharide to the alpha-1,6 position. This chain is 1,4-alpha-glucan branching enzyme GlgB, found in Pseudomonas fluorescens (strain ATCC BAA-477 / NRRL B-23932 / Pf-5).